Reading from the N-terminus, the 555-residue chain is (+)-delta-cadinene synthase isozyme A (555 aa).

The segment at 1–22 (MASQASQVLASPHPAISSENRP) is disordered. Positions 308, 312, 452, and 456 each coordinate Mg(2+). A DDXXD motif motif is present at residues 308 to 312 (DDTYD).

Belongs to the terpene synthase family. Mg(2+) serves as cofactor.

The enzyme catalyses (2E,6E)-farnesyl diphosphate = (1S,8aR)-delta-cadinene + diphosphate. It functions in the pathway secondary metabolite biosynthesis; terpenoid biosynthesis. Its function is as follows. Responsible for the cyclization of trans,trans-farnesyl diphosphate (FPP) to (+)-delta cadinene. In Gossypium arboreum (Tree cotton), this protein is (+)-delta-cadinene synthase isozyme A (CAD1-A).